A 147-amino-acid polypeptide reads, in one-letter code: MERPLTVLQVSLYHPTQGPVAFAKVPLQLQHDASRLLVGRGQDTHLQLQLPQLSRHHLCLEPYLEKGSNLLAFCLKVLTRQSCVWVNGLPLRYLEQVPLHSVNRISFSGIQMLIRKEGGASLEAFVCYFHLSPSPLIYRPKAQETDE.

The region spanning 36–108 (LLVGRGQDTH…LHSVNRISFS (73 aa)) is the FHA domain.

Interacts with TIFA.

In terms of biological role, inhibits TIFA-mediated TRAF6 activation possibly by inducing a conformational change in TIFA. This Rattus norvegicus (Rat) protein is TRAF-interacting protein with FHA domain-containing protein B.